The sequence spans 97 residues: Mitochondrial import inner membrane translocase subunit Tim8 A (97 aa).

Positions 43 to 66 (CWEKCMDKPGPKLDSRAEACFVNC) match the Twin CX3C motif motif. Cystine bridges form between Cys43–Cys66 and Cys47–Cys62. A phosphoserine mark is found at Ser57, Ser87, Ser94, and Ser96.

Belongs to the small Tim family. In terms of assembly, heterohexamer; composed of 3 copies of TIMM8A and 3 copies of TIMM13, named soluble 70 kDa complex. Associates with the TIM22 complex, whose core is composed of TIMM22.

The protein resides in the mitochondrion inner membrane. In terms of biological role, mitochondrial intermembrane chaperone that participates in the import and insertion of some multi-pass transmembrane proteins into the mitochondrial inner membrane. Also required for the transfer of beta-barrel precursors from the TOM complex to the sorting and assembly machinery (SAM complex) of the outer membrane. Acts as a chaperone-like protein that protects the hydrophobic precursors from aggregation and guide them through the mitochondrial intermembrane space. The TIMM8-TIMM13 complex mediates the import of proteins such as TIMM23, SLC25A12/ARALAR1 and SLC25A13/ARALAR2, while the predominant TIMM9-TIMM10 70 kDa complex mediates the import of much more proteins. The polypeptide is Mitochondrial import inner membrane translocase subunit Tim8 A (TIMM8A) (Bos taurus (Bovine)).